The primary structure comprises 123 residues: Aspartate 1-decarboxylase (123 aa).

Ser-25 (schiff-base intermediate with substrate; via pyruvic acid) is an active-site residue. Ser-25 carries the post-translational modification Pyruvic acid (Ser). A substrate-binding site is contributed by Thr-57. The Proton donor role is filled by Tyr-58. 73–75 (GAA) is a substrate binding site.

This sequence belongs to the PanD family. As to quaternary structure, heterooctamer of four alpha and four beta subunits. Pyruvate is required as a cofactor. Post-translationally, is synthesized initially as an inactive proenzyme, which is activated by self-cleavage at a specific serine bond to produce a beta-subunit with a hydroxyl group at its C-terminus and an alpha-subunit with a pyruvoyl group at its N-terminus.

The protein localises to the cytoplasm. It carries out the reaction L-aspartate + H(+) = beta-alanine + CO2. It participates in cofactor biosynthesis; (R)-pantothenate biosynthesis; beta-alanine from L-aspartate: step 1/1. Catalyzes the pyruvoyl-dependent decarboxylation of aspartate to produce beta-alanine. The polypeptide is Aspartate 1-decarboxylase (Clostridium novyi (strain NT)).